The following is a 1697-amino-acid chain: SAC3 family protein B (1697 aa).

4 disordered regions span residues 54 to 134, 167 to 280, 306 to 413, and 491 to 512; these read PPAS…QPGG, QRPN…SRSN, EATR…EQAR, and ESER…VDGD. Residues 120 to 134 show a composition bias toward low complexity; it reads QNPSPSSGQPYQPGG. The span at 178–192 shows a compositional bias: basic and acidic residues; it reads DGSRNFLKDHGEHSR. Polar residues predominate over residues 193–202; it reads ATSPPATSHI. Residues 215–227 are compositionally biased toward basic and acidic residues; that stretch reads RSQDSKRKSRSDI. Polar residues-rich tracts occupy residues 233–243, 257–280, and 335–380; these read MGFSRRNQSPV, PLSS…SRSN, and RFST…SPAT. A PCI domain is found at 625–813; it reads NIEQMNKTSV…KCSKLVHMKK (189 aa).

This sequence belongs to the SAC3 family. Interacts with SAC3A, EER5 and CML19. Interacts with UCH1 and UCH2.

The protein resides in the nucleus. In terms of biological role, component of the TREX-2 complex (transcription and export complex 2), a muliprotein complex that functions in docking export-competent ribonucleoprotein particles (mRNPs) to the nuclear entrance of the nuclear pore complex (nuclear basket). TREX-2 participates in mRNA export and accurate chromatin positioning in the nucleus by tethering genes to the nuclear periphery. The polypeptide is SAC3 family protein B (Arabidopsis thaliana (Mouse-ear cress)).